A 499-amino-acid polypeptide reads, in one-letter code: Hepatic triacylglycerol lipase (499 aa).

A signal peptide spans 1–21 (MGSPLCVPIFLAVCILIQSST). N-linked (GlcNAc...) asparagine glycosylation is present at asparagine 78. Serine 168 acts as the Nucleophile in catalysis. The active-site Charge relay system is the aspartate 194. The segment at 254 to 277 (CHFLELYKHIAQHGLNALSQTIKC) is essential for determining substrate specificity. Histidine 279 (charge relay system) is an active-site residue. The region spanning 352-486 (YHYQFKIQFI…HPTQEKNFVR (135 aa)) is the PLAT domain. N-linked (GlcNAc...) asparagine glycosylation occurs at asparagine 397.

It belongs to the AB hydrolase superfamily. Lipase family. As to quaternary structure, homodimer.

Its subcellular location is the secreted. The catalysed reaction is a triacylglycerol + H2O = a diacylglycerol + a fatty acid + H(+). The enzyme catalyses a 1-acyl-sn-glycero-3-phosphocholine + H2O = sn-glycerol 3-phosphocholine + a fatty acid + H(+). It catalyses the reaction a 1,2-diacyl-sn-glycero-3-phosphocholine + H2O = a 2-acyl-sn-glycero-3-phosphocholine + a fatty acid + H(+). It carries out the reaction 1,2,3-tri-(9Z-octadecenoyl)-glycerol + H2O = di-(9Z)-octadecenoylglycerol + (9Z)-octadecenoate + H(+). The catalysed reaction is 1,2-di-(9Z-octadecenoyl)-sn-glycero-3-phosphocholine + H2O = (9Z-octadecenoyl)-sn-glycero-3-phosphocholine + (9Z)-octadecenoate + H(+). The enzyme catalyses 1,2,3-tributanoylglycerol + H2O = dibutanoylglycerol + butanoate + H(+). It catalyses the reaction 1,2-dihexadecanoyl-sn-glycero-3-phosphocholine + H2O = hexadecanoyl-sn-glycero-3-phosphocholine + hexadecanoate + H(+). It carries out the reaction 1,2-di-(9Z-octadecenoyl)-sn-glycerol + H2O = 2-(9Z-octadecenoyl)-glycerol + (9Z)-octadecenoate + H(+). The catalysed reaction is 1,2,3-tri-(9Z-octadecenoyl)-glycerol + H2O = 2,3-di-(9Z)-octadecenoyl-sn-glycerol + (9Z)-octadecenoate + H(+). The enzyme catalyses 1-(9Z-octadecenoyl)-sn-glycero-3-phospho-L-serine + H2O = sn-glycero-3-phospho-L-serine + (9Z)-octadecenoate + H(+). It catalyses the reaction 1-hexadecanoyl-sn-glycero-3-phosphocholine + H2O = sn-glycerol 3-phosphocholine + hexadecanoate + H(+). It carries out the reaction 1,3-di-(9Z-octadecenoyl)-glycerol + H2O = 3-(9Z-octadecenoyl)-sn-glycerol + (9Z)-octadecenoate + H(+). Catalyzes the hydrolysis of triglycerides and phospholipids present in circulating plasma lipoproteins, including chylomicrons, intermediate density lipoproteins (IDL), low density lipoproteins (LDL) of large size and high density lipoproteins (HDL), releasing free fatty acids (FFA) and smaller lipoprotein particles. Also exhibits lysophospholipase activity. Can hydrolyze both neutral lipid and phospholipid substrates but shows a greater binding affinity for neutral lipid substrates than phospholipid substrates. In native LDL, preferentially hydrolyzes the phosphatidylcholine species containing polyunsaturated fatty acids at sn-2 position. The sequence is that of Hepatic triacylglycerol lipase (LIPC) from Oryctolagus cuniculus (Rabbit).